Here is a 142-residue protein sequence, read N- to C-terminus: Deoxyuridine 5'-triphosphate nucleotidohydrolase (142 aa).

Belongs to the dUTPase family. Requires Mg(2+) as cofactor.

The enzyme catalyses dUTP + H2O = dUMP + diphosphate + H(+). In terms of biological role, this enzyme is involved in nucleotide metabolism: it produces dUMP, the immediate precursor of thymidine nucleotides and it decreases the intracellular concentration of dUTP so that uracil cannot be incorporated into DNA. This Swinepox virus (strain Kasza) (SWPV) protein is Deoxyuridine 5'-triphosphate nucleotidohydrolase (DUT).